Here is a 682-residue protein sequence, read N- to C-terminus: DNA ligase (682 aa).

NAD(+) contacts are provided by residues 38 to 42, 87 to 88, and Glu119; these read DAEYD and SI. Lys121 serves as the catalytic N6-AMP-lysine intermediate. Arg142, Glu181, Lys298, and Lys322 together coordinate NAD(+). Zn(2+) contacts are provided by Cys416, Cys419, Cys434, and Cys439. The 82-residue stretch at 601–682 folds into the BRCT domain; sequence GHEMPLAGKT…LLSLLEPGER (82 aa).

The protein belongs to the NAD-dependent DNA ligase family. LigA subfamily. Mg(2+) serves as cofactor. The cofactor is Mn(2+).

The catalysed reaction is NAD(+) + (deoxyribonucleotide)n-3'-hydroxyl + 5'-phospho-(deoxyribonucleotide)m = (deoxyribonucleotide)n+m + AMP + beta-nicotinamide D-nucleotide.. Its function is as follows. DNA ligase that catalyzes the formation of phosphodiester linkages between 5'-phosphoryl and 3'-hydroxyl groups in double-stranded DNA using NAD as a coenzyme and as the energy source for the reaction. It is essential for DNA replication and repair of damaged DNA. The sequence is that of DNA ligase from Desulfosudis oleivorans (strain DSM 6200 / JCM 39069 / Hxd3) (Desulfococcus oleovorans).